Reading from the N-terminus, the 146-residue chain is D-aminoacyl-tRNA deacylase (146 aa).

Residues Gly137 to Pro138 carry the Gly-cisPro motif, important for rejection of L-amino acids motif.

Belongs to the DTD family. Homodimer.

It localises to the cytoplasm. The enzyme catalyses glycyl-tRNA(Ala) + H2O = tRNA(Ala) + glycine + H(+). The catalysed reaction is a D-aminoacyl-tRNA + H2O = a tRNA + a D-alpha-amino acid + H(+). An aminoacyl-tRNA editing enzyme that deacylates mischarged D-aminoacyl-tRNAs. Also deacylates mischarged glycyl-tRNA(Ala), protecting cells against glycine mischarging by AlaRS. Acts via tRNA-based rather than protein-based catalysis; rejects L-amino acids rather than detecting D-amino acids in the active site. By recycling D-aminoacyl-tRNA to D-amino acids and free tRNA molecules, this enzyme counteracts the toxicity associated with the formation of D-aminoacyl-tRNA entities in vivo and helps enforce protein L-homochirality. The protein is D-aminoacyl-tRNA deacylase of Shouchella clausii (strain KSM-K16) (Alkalihalobacillus clausii).